A 572-amino-acid chain; its full sequence is Mitochondrial chaperone TCM62 (572 aa).

Residues 1–16 constitute a mitochondrion transit peptide; the sequence is MLRNCLRKLGNHQTKC. At 17 to 471 the chain is on the mitochondrial matrix side; that stretch reads SVKTLHTPIY…KANEPNFMTK (455 aa). Residues 472–488 form a helical membrane-spanning segment; that stretch reads VGINAVLSAVILPSEVA. Residues 489 to 572 are Mitochondrial intermembrane-facing; the sequence is FKNAYGYNYY…VYKKPERHKA (84 aa).

This sequence belongs to the chaperonin (HSP60) family. Forms a high molecular mass protein complex of approximately 850 kDa.

Its subcellular location is the mitochondrion inner membrane. Chaperone. Required for the assembly of succinate dehydrogenase subunits. Ensures mitochondrial gene expression at elevated temperatures and prevents heat-aggregation of the ribosomal subunit VAR1. This chain is Mitochondrial chaperone TCM62 (TCM62), found in Saccharomyces cerevisiae (strain YJM789) (Baker's yeast).